Consider the following 89-residue polypeptide: Probable Fe(2+)-trafficking protein (89 aa).

Belongs to the Fe(2+)-trafficking protein family.

In terms of biological role, could be a mediator in iron transactions between iron acquisition and iron-requiring processes, such as synthesis and/or repair of Fe-S clusters in biosynthetic enzymes. This is Probable Fe(2+)-trafficking protein from Hahella chejuensis (strain KCTC 2396).